The primary structure comprises 100 residues: Large ribosomal subunit protein uL23 (100 aa).

It belongs to the universal ribosomal protein uL23 family. Part of the 50S ribosomal subunit. Contacts protein L29, and trigger factor when it is bound to the ribosome.

One of the early assembly proteins it binds 23S rRNA. One of the proteins that surrounds the polypeptide exit tunnel on the outside of the ribosome. Forms the main docking site for trigger factor binding to the ribosome. This chain is Large ribosomal subunit protein uL23, found in Shewanella frigidimarina (strain NCIMB 400).